The primary structure comprises 101 residues: Gamma-secretase subunit PEN-2 (101 aa).

The Cytoplasmic portion of the chain corresponds to 1-17 (MNLERVSNEEKLNLCRK). An intramembrane region (helical) is located at residues 18–36 (YYLGGFAFLPFLWLVNIFW). The Cytoplasmic segment spans residues 37–57 (FFKEAFFAPAYTEQSQIKGYV). The helical transmembrane segment at 58-78 (WRSAVGFLFWVIVLTTWITIF) threads the bilayer. Residues 79–101 (QIYRPRWGALGDYLSFTIPLGTP) lie on the Lumenal side of the membrane.

The protein belongs to the PEN-2 family. In terms of assembly, the functional gamma-secretase complex is composed of at least four polypeptides: a presenilin homodimer (PSEN1 or PSEN2), nicastrin (NCSTN), APH1 (APH1A or APH1B) and PSENEN.

It localises to the endoplasmic reticulum membrane. It is found in the golgi apparatus. The protein resides in the golgi stack membrane. Its subcellular location is the cell membrane. The protein localises to the membrane. In terms of biological role, essential subunit of the gamma-secretase complex, an endoprotease complex that catalyzes the intramembrane cleavage of integral membrane proteins such as Notch receptors and APP (amyloid-beta precursor protein). The gamma-secretase complex plays a role in Notch and Wnt signaling cascades and regulation of downstream processes via its role in processing key regulatory proteins, and by regulating cytosolic CTNNB1 levels. PSENEN modulates both endoproteolysis of presenilin and gamma-secretase activity. This is Gamma-secretase subunit PEN-2 (Psenen) from Rattus norvegicus (Rat).